The primary structure comprises 930 residues: Urea transporter 2 (930 aa).

A compositionally biased stretch (basic and acidic residues) spans 1–11 (MSDHHPLKEMS). The interval 1 to 90 (MSDHHPLKEM…KRRESEVSRR (90 aa)) is disordered. Composition is skewed to low complexity over residues 12–25 (DSNS…PLSS) and 32–43 (SELSSPTWPSSS). The span at 56–89 (PEEKDLRSSDEDSHIVKIEKPNERNKRRESEVSR) shows a compositional bias: basic and acidic residues. 8 helical membrane-spanning segments follow: residues 145–165 (ISGL…TIAG), 185–205 (AIAS…MAVF), 213–233 (WWLL…SSAL), 242–262 (LPVF…ATGH), 280–300 (NITW…VGVG), 311–331 (GGVI…HAAI), 350–372 (IYLG…MFYA), and 401–421 (VVGV…FLLL). A disordered region spans residues 452 to 479 (SEEEKSPNGGSGEQSHGSGQWKAEESSE). S487 carries the post-translational modification Phosphoserine. Transmembrane regions (helical) follow at residues 610-630 (GILI…SGCL), 648-668 (AIAA…MAVF), 676-696 (WWLL…SSAL), and 705-725 (LPVF…ATGH). Residue N743 is glycosylated (N-linked (GlcNAc...) asparagine). Helical transmembrane passes span 774 to 794 (GGIF…HAAI), 813 to 833 (IYFG…GGMF), 842 to 862 (LLAI…ANML), and 864 to 884 (VFGL…FLLL).

The protein belongs to the urea transporter family. In terms of tissue distribution, highly expressed in kidney medulla (at protein level). Also detected in testes, heart, brain and liver (at protein level). In the kidney, present in thin descending limbs of the loop of Henle and in the middle and terminal inner medullary collecting ducts. As to expression, expressed in the kidney medulla. Expressed in the peritubular myoid cells forming the outermost layer of the seminiferous tubules within the testes and is not detected in kidney. Expression levels are coordinated with the stage of testes development and increase 15 days postpartum, commensurate with the start of seminiferous tubule fluid movement.

The protein localises to the apical cell membrane. Its subcellular location is the basolateral cell membrane. The enzyme catalyses urea(in) = urea(out). With respect to regulation, inhibited by phloretin. Activated by forskolin, 3-isobutyl-1-methylxanthine (IBMX) and cAMP. Its activity is regulated as follows. Inhibited by phloretin. Inhibited by phloretin. Activated by forskolin, 3-isobutyl-1-methylxanthine (IBMX) and cAMP. Its function is as follows. Mediates the transport of urea driven by a concentration gradient across the cell membrane of the renal inner medullary collecting duct which is critical to the urinary concentrating mechanism. In terms of biological role, mediates the transport of urea driven by a concentration gradient across the cell membrane. Implicated in the urea movement across the blood-testis barrier and does not translocate water. The sequence is that of Urea transporter 2 (Slc14a2) from Mus musculus (Mouse).